A 397-amino-acid polypeptide reads, in one-letter code: Mediator of RNA polymerase II transcription subunit 3 (397 aa).

Met-1 bears the N-acetylmethionine mark. A compositionally biased stretch (low complexity) spans Ala-147–His-165. Disordered regions lie at residues Ala-147–Gln-227, Ser-288–Leu-327, and Phe-346–Asn-370. 2 stretches are compositionally biased toward polar residues: residues Ser-166–His-178 and Ser-189–Thr-202. The segment covering Lys-211–Lys-223 has biased composition (basic residues). Positions Gly-290–Phe-303 are enriched in polar residues. Over residues Gly-309 to Pro-322 the composition is skewed to low complexity.

Belongs to the mediator complex subunit 3 family. As to quaternary structure, component of the Mediator complex, which is composed of at least 21 subunits that form three structurally distinct submodules. The Mediator head module contains MED6, MED8, MED11, SRB4/MED17, SRB5/MED18, ROX3/MED19, SRB2/MED20 and SRB6/MED22, the middle module contains MED1, MED4, NUT1/MED5, MED7, CSE2/MED9, NUT2/MED10, SRB7/MED21 and SOH1/MED31, and the tail module contains MED2, PGD1/MED3, RGR1/MED14, GAL11/MED15 and SIN4/MED16. The head and the middle modules interact directly with RNA polymerase II, whereas the elongated tail module interacts with gene-specific regulatory proteins. PGD1/MED3 interacts directly with the CYC8-TUP1 corepressor proteins.

Its subcellular location is the nucleus. In terms of biological role, component of the Mediator complex, a coactivator involved in the regulated transcription of nearly all RNA polymerase II-dependent genes. Mediator functions as a bridge to convey information from gene-specific regulatory proteins to the basal RNA polymerase II transcription machinery. The Mediator complex, having a compact conformation in its free form, is recruited to promoters by direct interactions with regulatory proteins and serves for the assembly of a functional preinitiation complex with RNA polymerase II and the general transcription factors. The Mediator complex unfolds to an extended conformation and partially surrounds RNA polymerase II, specifically interacting with the unphosphorylated form of the C-terminal domain (CTD) of RNA polymerase II. The Mediator complex dissociates from the RNA polymerase II holoenzyme and stays at the promoter when transcriptional elongation begins. PGD1/MED3 is also involved in direct repeat recombination. In Saccharomyces cerevisiae (strain ATCC 204508 / S288c) (Baker's yeast), this protein is Mediator of RNA polymerase II transcription subunit 3 (PGD1).